We begin with the raw amino-acid sequence, 146 residues long: Snaclec 4 (146 aa).

A signal peptide spans 1–23 (MGRFISISFGLLVVFLSLSGTEA). 3 cysteine pairs are disulfide-bonded: cysteine 27–cysteine 38, cysteine 55–cysteine 144, and cysteine 121–cysteine 136. The C-type lectin domain maps to 34–145 (YDQNCYKVFT…CNFIAPVVCK (112 aa)).

Belongs to the snaclec family. Heterodimer; disulfide-linked.

It is found in the secreted. Functionally, interferes with one step of hemostasis (modulation of platelet aggregation, or coagulation cascade, for example). The sequence is that of Snaclec 4 from Daboia siamensis (Eastern Russel's viper).